Consider the following 124-residue polypeptide: uncharacterized protein (124 aa).

It is found in the cytoplasm. The protein localises to the nucleus. This is an uncharacterized protein from Schizosaccharomyces pombe (strain 972 / ATCC 24843) (Fission yeast).